A 152-amino-acid chain; its full sequence is Small ribosomal subunit protein uS13A (152 aa).

The protein belongs to the universal ribosomal protein uS13 family. In terms of assembly, component of the small ribosomal subunit (SSU). Mature yeast ribosomes consist of a small (40S) and a large (60S) subunit. The 40S small subunit contains 1 molecule of ribosomal RNA (18S rRNA) and at least 33 different proteins. The large 60S subunit contains 3 rRNA molecules (25S, 5.8S and 5S rRNA) and at least 46 different proteins.

The protein resides in the cytoplasm. Component of the ribosome, a large ribonucleoprotein complex responsible for the synthesis of proteins in the cell. The small ribosomal subunit (SSU) binds messenger RNAs (mRNAs) and translates the encoded message by selecting cognate aminoacyl-transfer RNA (tRNA) molecules. The large subunit (LSU) contains the ribosomal catalytic site termed the peptidyl transferase center (PTC), which catalyzes the formation of peptide bonds, thereby polymerizing the amino acids delivered by tRNAs into a polypeptide chain. The nascent polypeptides leave the ribosome through a tunnel in the LSU and interact with protein factors that function in enzymatic processing, targeting, and the membrane insertion of nascent chains at the exit of the ribosomal tunnel. In Schizosaccharomyces pombe (strain 972 / ATCC 24843) (Fission yeast), this protein is Small ribosomal subunit protein uS13A (rps1801).